Reading from the N-terminus, the 225-residue chain is UPF0758 protein Sbal223_0402 (225 aa).

Residues 102-224 (VLTNPDLTRD…IVSFAERGWI (123 aa)) form the MPN domain. His173, His175, and Asp186 together coordinate Zn(2+). The short motif at 173–186 (HNHPSGIAEPSQAD) is the JAMM motif element.

This sequence belongs to the UPF0758 family.

This is UPF0758 protein Sbal223_0402 from Shewanella baltica (strain OS223).